The following is a 356-amino-acid chain: GTPase Obg (356 aa).

The Obg domain occupies 1–159 (MKFLDEAKVY…RWIWLRMKLI (159 aa)). Residues 160–327 (ADAGLVGLPN…ALRKLADVIS (168 aa)) enclose the OBG-type G domain. GTP is bound by residues 166 to 173 (GLPNAGKS), 191 to 195 (FTTLH), 212 to 215 (DIPG), 279 to 282 (NKID), and 308 to 310 (SGA). Positions 173 and 193 each coordinate Mg(2+). The tract at residues 332-356 (SIKAKSTSDSAATEEPWAAPLPPQG) is disordered.

Belongs to the TRAFAC class OBG-HflX-like GTPase superfamily. OBG GTPase family. In terms of assembly, monomer. The cofactor is Mg(2+).

Its subcellular location is the cytoplasm. In terms of biological role, an essential GTPase which binds GTP, GDP and possibly (p)ppGpp with moderate affinity, with high nucleotide exchange rates and a fairly low GTP hydrolysis rate. Plays a role in control of the cell cycle, stress response, ribosome biogenesis and in those bacteria that undergo differentiation, in morphogenesis control. The polypeptide is GTPase Obg (Bradyrhizobium sp. (strain BTAi1 / ATCC BAA-1182)).